The following is a 427-amino-acid chain: Serine/threonine-protein kinase ssn3 (427 aa).

A Protein kinase domain is found at 40–369; sequence YHIVGFISSG…AQEALEHPYF (330 aa). Residues 46–54 and Lys-70 each bind ATP; that span reads ISSGTYGRV. Catalysis depends on Asp-172, which acts as the Proton acceptor. The span at 390–399 shows a compositional bias: basic and acidic residues; the sequence is RRVTQDDNDI. A disordered region spans residues 390 to 427; sequence RRVTQDDNDIRSGSLPGTKRSGLPDDSLLGRATKRLKE.

The protein belongs to the protein kinase superfamily. CMGC Ser/Thr protein kinase family. CDC2/CDKX subfamily. As to quaternary structure, component of the srb8-11 complex, a regulatory module of the Mediator complex. It depends on Mg(2+) as a cofactor.

The protein localises to the nucleus. It carries out the reaction L-seryl-[protein] + ATP = O-phospho-L-seryl-[protein] + ADP + H(+). The enzyme catalyses L-threonyl-[protein] + ATP = O-phospho-L-threonyl-[protein] + ADP + H(+). The catalysed reaction is [DNA-directed RNA polymerase] + ATP = phospho-[DNA-directed RNA polymerase] + ADP + H(+). In terms of biological role, component of the srb8-11 complex. The srb8-11 complex is a regulatory module of the Mediator complex which is itself involved in regulation of basal and activated RNA polymerase II-dependent transcription. The srb8-11 complex may be involved in the transcriptional repression of a subset of genes regulated by Mediator. It may inhibit the association of the Mediator complex with RNA polymerase II to form the holoenzyme complex. The srb8-11 complex phosphorylates the C-terminal domain (CTD) of the largest subunit of RNA polymerase II. The protein is Serine/threonine-protein kinase ssn3 (ssn3) of Aspergillus niger (strain ATCC MYA-4892 / CBS 513.88 / FGSC A1513).